The chain runs to 692 residues: Elongation factor G (692 aa).

Residues 8–282 (ENTRNIGIMA…GVVDYLPSPL (275 aa)) enclose the tr-type G domain. GTP-binding positions include 17 to 24 (AHIDAGKT), 81 to 85 (DTPGH), and 135 to 138 (NKMD).

It belongs to the TRAFAC class translation factor GTPase superfamily. Classic translation factor GTPase family. EF-G/EF-2 subfamily.

It is found in the cytoplasm. In terms of biological role, catalyzes the GTP-dependent ribosomal translocation step during translation elongation. During this step, the ribosome changes from the pre-translocational (PRE) to the post-translocational (POST) state as the newly formed A-site-bound peptidyl-tRNA and P-site-bound deacylated tRNA move to the P and E sites, respectively. Catalyzes the coordinated movement of the two tRNA molecules, the mRNA and conformational changes in the ribosome. This chain is Elongation factor G, found in Geobacillus thermodenitrificans (strain NG80-2).